A 960-amino-acid polypeptide reads, in one-letter code: Dynamin-like GTPase OPA1, mitochondrial (960 aa).

A mitochondrion-targeting transit peptide spans 1–87 (MWRLRRAAVA…IKYGYQPRRN (87 aa)). Over 88-96 (FWPARLATR) the chain is Mitochondrial matrix. A helical transmembrane segment spans residues 97 to 113 (LLKLRYLILGSAVGGGY). The Mitochondrial intermembrane portion of the chain corresponds to 114-770 (TAKKTFDQWK…NAIENMVGPD (657 aa)). Residues 210–254 (SDKEKIDQLQEELLHTQLKYQRILERLEKENKELRKLVLQKDDKG) are a coiled coil. N6-acetyllysine is present on lysine 228. Positions 285 to 561 (QDHLPRVVVV…FWKMVRESVE (277 aa)) constitute a Dynamin-type G domain. Residues 295–302 (GDQSAGKT) are G1 motif. Residues serine 298, glycine 300, lysine 301, threonine 302, serine 303, and glycine 317 each coordinate GTP. Threonine 302 provides a ligand contact to Mg(2+). The segment at 321–324 (MMTR) is G2 motif. Residues threonine 323 and aspartate 398 each contribute to the Mg(2+) site. The tract at residues 398–401 (DLPG) is G3 motif. A G4 motif region spans residues 467–470 (TKVD). Residues lysine 468, aspartate 470, and threonine 503 each coordinate GTP. The segment at 501–504 (VVTG) is G5 motif. Stalk region regions lie at residues 589-836 (DRNE…IKDT) and 874-928 (CNDV…IKLL). Positions 736 to 856 (SDKQQWDAAI…KTALNHCNLC (121 aa)) are paddle region. Residues 771–781 (WKKRWLYWKNR) lie within the membrane without spanning it. Residues 782-960 (TQEQCVHNET…AFIEALHQEK (179 aa)) lie on the Mitochondrial intermembrane side of the membrane. A disulfide bridge links cysteine 856 with cysteine 874. Residues 895–960 (RQQLTNTEVR…AFIEALHQEK (66 aa)) adopt a coiled-coil conformation.

This sequence belongs to the TRAFAC class dynamin-like GTPase superfamily. Dynamin/Fzo/YdjA family. In terms of assembly, oligomeric complex consisting of membrane-bound and soluble forms of OPA1. Interacts with RCC1L; RCC1L acts as a guanine nucleotide exchange factor (GEF) for OPA1 by exchanging bound GDP for free GTP. Interacts with CHCHD3 and IMMT; these interactions occur preferentially with soluble OPA1 forms. Interacts with PRELID1. Cleaved by OMA1 or YME1L downstream of the transmembrane region in response to different signals to generate soluble forms. Cleaved by OMA1 at position S1 following stress conditions, generating the short soluble form (Dynamin-like GTPase OPA1, short form; S-OPA1). AFG3L2 is involved in the regulation of OMA1-dependent processing of OPA1. PARL-dependent proteolytic processing releases an antiapoptotic soluble form not required for mitochondrial fusion.

Its subcellular location is the mitochondrion inner membrane. It localises to the mitochondrion intermembrane space. The catalysed reaction is GTP + H2O = GDP + phosphate + H(+). Activated by guanine nucleotide exchange factor RCC1L. Dynamin-related GTPase that is essential for normal mitochondrial morphology by mediating fusion of the mitochondrial inner membranes, regulating cristae morphology and maintaining respiratory chain function. Exists in two forms: the transmembrane, long form (Dynamin-like GTPase OPA1, long form; L-OPA1), which is tethered to the inner mitochondrial membrane, and the short soluble form (Dynamin-like GTPase OPA1, short form; S-OPA1), which results from proteolytic cleavage and localizes in the intermembrane space. Both forms (L-OPA1 and S-OPA1) cooperate to catalyze the fusion of the mitochondrial inner membrane. The equilibrium between L-OPA1 and S-OPA1 is essential: excess levels of S-OPA1, produced by cleavage by OMA1 following loss of mitochondrial membrane potential, lead to an impaired equilibrium between L-OPA1 and S-OPA1, inhibiting mitochondrial fusion. The balance between L-OPA1 and S-OPA1 also influences cristae shape and morphology. Involved in remodeling cristae and the release of cytochrome c during apoptosis. Proteolytic processing by PARL in response to intrinsic apoptotic signals may lead to disassembly of OPA1 oligomers and release of the caspase activator cytochrome C (CYCS) into the mitochondrial intermembrane space. Acts as a regulator of T-helper Th17 cells, which are characterized by cells with fused mitochondria with tight cristae, by mediating mitochondrial membrane remodeling: OPA1 is required for interleukin-17 (IL-17) production. Its role in mitochondrial morphology is required for mitochondrial genome maintenance. Its function is as follows. Constitutes the transmembrane long form (L-OPA1) that plays a central role in mitochondrial inner membrane fusion and cristae morphology. L-OPA1 and the soluble short form (S-OPA1) form higher-order helical assemblies that coordinate the fusion of mitochondrial inner membranes. Inner membrane-anchored L-OPA1 molecules initiate membrane remodeling by recruiting soluble S-OPA1 to rapidly polymerize into a flexible cylindrical scaffold encaging the mitochondrial inner membrane. Once at the membrane surface, the formation of S-OPA1 helices induce bilayer curvature. OPA1 dimerization through the paddle region, which inserts into cardiolipin-containing membrane, promotes GTP hydrolysis and the helical assembly of a flexible OPA1 lattice on the membrane, which drives membrane curvature and mitochondrial fusion. Plays a role in the maintenance and remodeling of mitochondrial cristae, some invaginations of the mitochondrial inner membrane that provide an increase in the surface area. Probably acts by forming helical filaments at the inside of inner membrane tubes with the shape and dimensions of crista junctions. The equilibrium between L-OPA1 and S-OPA1 influences cristae shape and morphology: increased L-OPA1 levels promote cristae stacking and elongated mitochondria, while increased S-OPA1 levels correlated with irregular cristae packing and round mitochondria shape. Functionally, constitutes the soluble short form (S-OPA1) generated by cleavage by OMA1, which plays a central role in mitochondrial inner membrane fusion and cristae morphology. The transmembrane long form (L-OPA1) and the S-OPA1 form higher-order helical assemblies that coordinate the fusion of mitochondrial inner membranes. Inner membrane-anchored L-OPA1 molecules initiate membrane remodeling by recruiting soluble S-OPA1 to rapidly polymerize into a flexible cylindrical scaffold encaging the mitochondrial inner membrane. Once at the membrane surface, the formation of S-OPA1 helices induce bilayer curvature. OPA1 dimerization through the paddle region, which inserts into cardiolipin-containing membrane, promotes GTP hydrolysis and the helical assembly of a flexible OPA1 lattice on the membrane, which drives membrane curvature and mitochondrial fusion. Excess levels of S-OPA1 produced by cleavage by OMA1 following stress conditions that induce loss of mitochondrial membrane potential, lead to an impaired equilibrium between L-OPA1 and S-OPA1, thereby inhibiting mitochondrial fusion. Involved in mitochondrial safeguard in response to transient mitochondrial membrane depolarization by mediating flickering: cleavage by OMA1 leads to excess production of S-OPA1, preventing mitochondrial hyperfusion. Plays a role in the maintenance and remodeling of mitochondrial cristae, some invaginations of the mitochondrial inner membrane that provide an increase in the surface area. Probably acts by forming helical filaments at the inside of inner membrane tubes with the shape and dimensions of crista junctions. The equilibrium between L-OPA1 and S-OPA1 influences cristae shape and morphology: increased L-OPA1 levels promote cristae stacking and elongated mitochondria, while increased S-OPA1 levels correlated with irregular cristae packing and round mitochondria shape. In Pongo abelii (Sumatran orangutan), this protein is Dynamin-like GTPase OPA1, mitochondrial.